The primary structure comprises 396 residues: S-adenosylmethionine synthase 2 (396 aa).

Glutamate 13 is a Mg(2+) binding site. Histidine 19 is an ATP binding site. Glutamate 47 is a binding site for K(+). 2 residues coordinate L-methionine: glutamate 60 and glutamine 103. Residues 171-173 (DGK), 239-242 (SGRF), aspartate 250, 256-257 (RK), alanine 273, lysine 277, and lysine 281 contribute to the ATP site. Aspartate 250 is an L-methionine binding site. Residue lysine 281 coordinates L-methionine.

This sequence belongs to the AdoMet synthase family. In terms of assembly, homotetramer. The cofactor is Mn(2+). Mg(2+) is required as a cofactor. Requires Co(2+) as cofactor. K(+) serves as cofactor. In terms of tissue distribution, expressed in roots, stems and leaves (at protein level).

It is found in the cytoplasm. It carries out the reaction L-methionine + ATP + H2O = S-adenosyl-L-methionine + phosphate + diphosphate. Its pathway is amino-acid biosynthesis; S-adenosyl-L-methionine biosynthesis; S-adenosyl-L-methionine from L-methionine: step 1/1. In terms of biological role, catalyzes the formation of S-adenosylmethionine from methionine and ATP. The reaction comprises two steps that are both catalyzed by the same enzyme: formation of S-adenosylmethionine (AdoMet) and triphosphate, and subsequent hydrolysis of the triphosphate. May be involved in the synthesis of betain in response to abiotic stress such as high salinity. The sequence is that of S-adenosylmethionine synthase 2 (SAMS2) from Atriplex nummularia (Old man saltbush).